Reading from the N-terminus, the 99-residue chain is Essential MCU regulator, mitochondrial (99 aa).

The N-terminal 39 residues, 1-39 (MAARVGVLSVAGFRAAARAGGLLRASKQSSAVSHVPCRT), are a transit peptide targeting the mitochondrion. Residues 40–57 (AIATSAGTVLPKPEKVSF) lie on the Mitochondrial matrix side of the membrane. Residues 58–77 (GLLRVFTVVIPFLYIGTLIS) form a helical membrane-spanning segment. At 78–99 (KNFAALLEEHDIFVPEDDDDDD) the chain is on the mitochondrial intermembrane side.

This sequence belongs to the SMDT1/EMRE family. In terms of assembly, component of the uniplex complex.

It localises to the mitochondrion inner membrane. Functionally, essential regulatory subunit of the mitochondrial calcium uniporter complex (uniplex), a complex that mediates calcium uptake into mitochondria. Required to bridge the calcium-sensing proteins micu1 with the calcium-conducting subunit mcu. Acts by mediating activation of mcu and retention of micu1 to the mcu pore, in order to ensure tight regulation of the uniplex complex and appropriate responses to intracellular calcium signaling. This Xenopus tropicalis (Western clawed frog) protein is Essential MCU regulator, mitochondrial.